A 1242-amino-acid chain; its full sequence is ATP-dependent helicase/nuclease subunit A (1242 aa).

In terms of domain architecture, UvrD-like helicase ATP-binding spans 13–486; the sequence is SQWTDDQWKA…IDLAKNFRSR (474 aa). Residue 34–41 coordinates ATP; that stretch reads AAAGSGKT. The UvrD-like helicase C-terminal domain occupies 506-806; sequence GEIEYDADAE…RIMTIHKSKG (301 aa).

This sequence belongs to the helicase family. AddA subfamily. As to quaternary structure, heterodimer of AddA and AddB/RexB. It depends on Mg(2+) as a cofactor.

The catalysed reaction is Couples ATP hydrolysis with the unwinding of duplex DNA by translocating in the 3'-5' direction.. It carries out the reaction ATP + H2O = ADP + phosphate + H(+). Its function is as follows. The heterodimer acts as both an ATP-dependent DNA helicase and an ATP-dependent, dual-direction single-stranded exonuclease. Recognizes the chi site generating a DNA molecule suitable for the initiation of homologous recombination. The AddA nuclease domain is required for chi fragment generation; this subunit has the helicase and 3' -&gt; 5' nuclease activities. The protein is ATP-dependent helicase/nuclease subunit A of Bacillus cytotoxicus (strain DSM 22905 / CIP 110041 / 391-98 / NVH 391-98).